The sequence spans 761 residues: Zinc finger protein 711 (761 aa).

C2H2-type zinc fingers lie at residues 383–408 (YPCHICGKKFKSRGFLKRHMKNHPDH), 414–436 (YQCTDCEFTTNKKVSFHNHLESH), 476–499 (HKCKYCEYETAEQGLLNRHLLAVH), 505–527 (HVCVECAKGFRHPSELKKHMRTH), and 533–556 (FHCQHCEFSCADQSNLKTHIKSKH). The segment at 562–584 (FKCGHCPQAFADDKELQRHAEIF) adopts a C2H2-type 6; atypical zinc-finger fold. Positions 564, 567, and 580 each coordinate Zn(2+). 6 consecutive C2H2-type zinc fingers follow at residues 590-613 (HQCPHCEHKSTNSSDLKRHIISVH), 619-641 (HKCDVCEKGFHRPSELKKHSETH), 647-670 (HQCRHCDFKTLDPFTLSRHILSVH), 676-698 (FKCKRCKRGFRHQNELKKHMKTH), 704-727 (YQCQYCEYNTTDASGFKRHVISIH), and 733-755 (HRCDYCKKGFRRPSEKNQHIMRH).

This sequence belongs to the krueppel C2H2-type zinc-finger protein family. Present in ovary and brain but not in other tissues (at protein level).

It is found in the nucleus. The protein localises to the cytoplasm. Transcription regulator required for brain development. Probably acts as a transcription factor that binds to the promoter of target genes, leading to activate their expression. This is Zinc finger protein 711 (znf711) from Danio rerio (Zebrafish).